A 148-amino-acid polypeptide reads, in one-letter code: Nucleoside diphosphate kinase 1 (148 aa).

ATP-binding residues include K9, F57, R85, T91, R102, and N112. The active-site Pros-phosphohistidine intermediate is the H115.

This sequence belongs to the NDK family. It depends on Mg(2+) as a cofactor.

The enzyme catalyses a 2'-deoxyribonucleoside 5'-diphosphate + ATP = a 2'-deoxyribonucleoside 5'-triphosphate + ADP. The catalysed reaction is a ribonucleoside 5'-diphosphate + ATP = a ribonucleoside 5'-triphosphate + ADP. Major role in the synthesis of nucleoside triphosphates other than ATP. The ATP gamma phosphate is transferred to the NDP beta phosphate via a ping-pong mechanism, using a phosphorylated active-site intermediate. The protein is Nucleoside diphosphate kinase 1 of Nicotiana tabacum (Common tobacco).